The following is a 269-amino-acid chain: Thymidylate synthase (269 aa).

Arg21 serves as a coordination point for dUMP. His51 is a (6R)-5,10-methylene-5,6,7,8-tetrahydrofolate binding site. Arg126–Arg127 contributes to the dUMP binding site. The active-site Nucleophile is Cys146. Residues Arg171–Asp174, Asn182, and His212–Tyr214 contribute to the dUMP site. A (6R)-5,10-methylene-5,6,7,8-tetrahydrofolate-binding site is contributed by Asp174. Ala268 is a binding site for (6R)-5,10-methylene-5,6,7,8-tetrahydrofolate.

The protein belongs to the thymidylate synthase family. Bacterial-type ThyA subfamily. As to quaternary structure, homodimer.

The protein resides in the cytoplasm. The enzyme catalyses dUMP + (6R)-5,10-methylene-5,6,7,8-tetrahydrofolate = 7,8-dihydrofolate + dTMP. It functions in the pathway pyrimidine metabolism; dTTP biosynthesis. In terms of biological role, catalyzes the reductive methylation of 2'-deoxyuridine-5'-monophosphate (dUMP) to 2'-deoxythymidine-5'-monophosphate (dTMP) while utilizing 5,10-methylenetetrahydrofolate (mTHF) as the methyl donor and reductant in the reaction, yielding dihydrofolate (DHF) as a by-product. This enzymatic reaction provides an intracellular de novo source of dTMP, an essential precursor for DNA biosynthesis. This Methylocella silvestris (strain DSM 15510 / CIP 108128 / LMG 27833 / NCIMB 13906 / BL2) protein is Thymidylate synthase.